The primary structure comprises 180 residues: Large ribosomal subunit protein uL5 (180 aa).

This sequence belongs to the universal ribosomal protein uL5 family. As to quaternary structure, part of the 50S ribosomal subunit; part of the 5S rRNA/L5/L18/L25 subcomplex. Contacts the 5S rRNA and the P site tRNA. Forms a bridge to the 30S subunit in the 70S ribosome.

This is one of the proteins that bind and probably mediate the attachment of the 5S RNA into the large ribosomal subunit, where it forms part of the central protuberance. In the 70S ribosome it contacts protein S13 of the 30S subunit (bridge B1b), connecting the 2 subunits; this bridge is implicated in subunit movement. Contacts the P site tRNA; the 5S rRNA and some of its associated proteins might help stabilize positioning of ribosome-bound tRNAs. In Chlamydia caviae (strain ATCC VR-813 / DSM 19441 / 03DC25 / GPIC) (Chlamydophila caviae), this protein is Large ribosomal subunit protein uL5.